We begin with the raw amino-acid sequence, 249 residues long: 2,3-bisphosphoglycerate-dependent phosphoglycerate mutase (249 aa).

Residues 7–14 (RHGESEWN), 20–21 (TG), Arg59, 86–89 (ERHY), Lys97, 113–114 (RR), and 182–183 (GN) each bind substrate. The active-site Tele-phosphohistidine intermediate is the His8. Catalysis depends on Glu86, which acts as the Proton donor/acceptor.

This sequence belongs to the phosphoglycerate mutase family. BPG-dependent PGAM subfamily.

The enzyme catalyses (2R)-2-phosphoglycerate = (2R)-3-phosphoglycerate. It functions in the pathway carbohydrate degradation; glycolysis; pyruvate from D-glyceraldehyde 3-phosphate: step 3/5. Functionally, catalyzes the interconversion of 2-phosphoglycerate and 3-phosphoglycerate. The chain is 2,3-bisphosphoglycerate-dependent phosphoglycerate mutase from Lachnoclostridium phytofermentans (strain ATCC 700394 / DSM 18823 / ISDg) (Clostridium phytofermentans).